Here is a 129-residue protein sequence, read N- to C-terminus: AQCEATVESNDAMQYNVKEIVVDKSCKQFTMHLKHVGKMAKVAMGHNLVLTKDADKQAVATDGMGAGLAQDYVKAGDTRVIAHTKVIGGGESDSVTFDVSKIAAGENYAYFCSFPGHWAMMKGTLKLGS.

Residues 1-129 enclose the Plastocyanin-like domain; the sequence is AQCEATVESN…MMKGTLKLGS (129 aa). Cysteines 3 and 26 form a disulfide. The Cu cation site is built by H46, C112, H117, and M121.

It localises to the periplasm. Transfers electrons from cytochrome c551 to cytochrome oxidase. This chain is Azurin-2, found in Alcaligenes xylosoxydans xylosoxydans (Achromobacter xylosoxidans).